The chain runs to 281 residues: Mad-like protein 1 (281 aa).

Over residues 71–80 (SCASNASTSS) the composition is skewed to low complexity. Residues 71–105 (SCASNASTSSQPYCSSPPARKSSKHSRTAHNELEK) form a disordered region. The tract at residues 95–108 (HSRTAHNELEKTRR) is basic motif. Positions 95 to 147 (HSRTAHNELEKTRRANLRGCLETLKMLVPCVSDATRNTTLALLTRARDHIIEL) constitute a bHLH domain. A helix-loop-helix motif region spans residues 109-147 (ANLRGCLETLKMLVPCVSDATRNTTLALLTRARDHIIEL). Residues 144–185 (IIELQDSNAAQMKKLNDLRDEQDELVAELAQLQADEEVAQAT) are a coiled coil. The disordered stretch occupies residues 189 to 213 (CQTLSQSRPESRASSFTSTSSRDSP). Residues 200-212 (RASSFTSTSSRDS) show a composition bias toward low complexity.

In terms of assembly, forms heterodimer with mxl-1 in the presence and absence of DNA. In terms of processing, ubiquitinated. In terms of tissue distribution, expressed in intestinal cells in adults. Expressed in D-type motor neuron cell bodies.

It is found in the nucleus. Its function is as follows. Transcriptional regulator which binds to the E box motif 5'-CACGTG-3', when in a heterodimeric complex with mxl-1. Involved in the control of lifespan in response to dietary restriction, the decline in protein homeostasis associated with normal aging, germline signaling and may overlap with the insulin-like signaling pathway. Plays a role in autophagy. Involved in promoting infection by the microsporidian pathogen N.parisii, possibly together with transcription factors pha-4 and zip-10. In response to neuronal injury, mdl-1 is targeted by sdz-33 for ubiquitin-mediated degradation, probably thereby reducing levels of mdl-1-mxl-1 heterodimers, allowing free mxl-1 to form complexes with tdpt-1 and thus inhibiting tdpt-1-dependent sumoylation of ets-4. This is Mad-like protein 1 from Caenorhabditis elegans.